Here is a 366-residue protein sequence, read N- to C-terminus: Ribosomal RNA large subunit methyltransferase M (366 aa).

Residues Ser-188, Cys-221 to Gly-224, Asp-240, Asp-260, and Asp-277 contribute to the S-adenosyl-L-methionine site. Lys-306 acts as the Proton acceptor in catalysis.

This sequence belongs to the class I-like SAM-binding methyltransferase superfamily. RNA methyltransferase RlmE family. RlmM subfamily. Monomer.

It localises to the cytoplasm. It catalyses the reaction cytidine(2498) in 23S rRNA + S-adenosyl-L-methionine = 2'-O-methylcytidine(2498) in 23S rRNA + S-adenosyl-L-homocysteine + H(+). In terms of biological role, catalyzes the 2'-O-methylation at nucleotide C2498 in 23S rRNA. This chain is Ribosomal RNA large subunit methyltransferase M, found in Shigella flexneri serotype 5b (strain 8401).